Here is a 129-residue protein sequence, read N- to C-terminus: uncharacterized protein (129 aa).

A helical membrane pass occupies residues 5–25 (IIGLTLAFFVLFLTAVAILFT).

It is found in the membrane. This is an uncharacterized protein from Mycoplasma pneumoniae (strain ATCC 29342 / M129 / Subtype 1) (Mycoplasmoides pneumoniae).